The chain runs to 467 residues: 3-isopropylmalate dehydratase large subunit (467 aa).

[4Fe-4S] cluster contacts are provided by Cys-348, Cys-409, and Cys-412.

It belongs to the aconitase/IPM isomerase family. LeuC type 1 subfamily. As to quaternary structure, heterodimer of LeuC and LeuD. The cofactor is [4Fe-4S] cluster.

It catalyses the reaction (2R,3S)-3-isopropylmalate = (2S)-2-isopropylmalate. Its pathway is amino-acid biosynthesis; L-leucine biosynthesis; L-leucine from 3-methyl-2-oxobutanoate: step 2/4. Functionally, catalyzes the isomerization between 2-isopropylmalate and 3-isopropylmalate, via the formation of 2-isopropylmaleate. The protein is 3-isopropylmalate dehydratase large subunit of Thiobacillus denitrificans (strain ATCC 25259 / T1).